Here is a 1482-residue protein sequence, read N- to C-terminus: Pregnancy zone protein (1482 aa).

Positions 1-25 (MRKDRLLHLCLVLLLILLSASDSNS) are cleaved as a signal peptide. 5 N-linked (GlcNAc...) asparagine glycosylation sites follow: asparagine 54, asparagine 69, asparagine 246, asparagine 392, and asparagine 406. The bait region stretch occupies residues 685 to 735 (CSVIPSVSAGAVGQGYYGAGLGVVERPYVPQLGTYNVIPLNNEQSSGPVPE). N-linked (GlcNAc...) asparagine glycans are attached at residues asparagine 753, asparagine 875, and asparagine 932. A cross-link (isoglutamyl cysteine thioester (Cys-Gln)) is located at residues 978-981 (CGEQ). Asparagine 997 and asparagine 1430 each carry an N-linked (GlcNAc...) asparagine glycan.

This sequence belongs to the protease inhibitor I39 (alpha-2-macroglobulin) family. Homotetramer, which consists of two pairs of disulfide-linked chains. As to expression, plasma. Prominent constituent of late-pregnancy sera.

Its subcellular location is the secreted. Its function is as follows. Is able to inhibit all four classes of proteinases by a unique 'trapping' mechanism. This protein has a peptide stretch, called the 'bait region' which contains specific cleavage sites for different proteinases. When a proteinase cleaves the bait region, a conformational change is induced in the protein which traps the proteinase. The entrapped enzyme remains active against low molecular weight substrates (activity against high molecular weight substrates is greatly reduced). Following cleavage in the bait region a thioester bond is hydrolyzed and mediates the covalent binding of the protein to the proteinase. The protein is Pregnancy zone protein (PZP) of Homo sapiens (Human).